Here is a 134-residue protein sequence, read N- to C-terminus: 4-carboxymuconolactone decarboxylase (134 aa).

This sequence belongs to the carboxymuconolactone decarboxylase family.

The catalysed reaction is (R)-2-(carboxymethyl)-5-oxo-2,5-dihydro-2-furoate + H(+) = (4,5-dihydro-5-oxofuran-2-yl)-acetate + CO2. It participates in aromatic compound metabolism; beta-ketoadipate pathway; 5-oxo-4,5-dihydro-2-furylacetate from 3-carboxy-cis,cis-muconate: step 2/2. The polypeptide is 4-carboxymuconolactone decarboxylase (pcaC) (Acinetobacter baylyi (strain ATCC 33305 / BD413 / ADP1)).